Reading from the N-terminus, the 161-residue chain is Regulator of ribonuclease activity A (161 aa).

This sequence belongs to the RraA family. Homotrimer. Binds to both RNA-binding sites in the C-terminal region of Rne and to RhlB.

The protein localises to the cytoplasm. Globally modulates RNA abundance by binding to RNase E (Rne) and regulating its endonucleolytic activity. Can modulate Rne action in a substrate-dependent manner by altering the composition of the degradosome. Modulates RNA-binding and helicase activities of the degradosome. The chain is Regulator of ribonuclease activity A from Edwardsiella ictaluri (strain 93-146).